We begin with the raw amino-acid sequence, 319 residues long: Glutathione synthetase (319 aa).

The ATP-grasp domain maps to 129–314 (KLAILNFSRF…VAAMFADAVA (186 aa)). 155–211 (LKEHGDIIIKPLDGMGGMGIFRLTEKDPNIGSILETLMQLDSRTIMAQRYIPEIVHG) provides a ligand contact to ATP. The Mg(2+) site is built by Glu-285 and Asn-287.

This sequence belongs to the prokaryotic GSH synthase family. Requires Mg(2+) as cofactor. Mn(2+) serves as cofactor.

The catalysed reaction is gamma-L-glutamyl-L-cysteine + glycine + ATP = glutathione + ADP + phosphate + H(+). Its pathway is sulfur metabolism; glutathione biosynthesis; glutathione from L-cysteine and L-glutamate: step 2/2. This chain is Glutathione synthetase, found in Neisseria meningitidis serogroup B (strain ATCC BAA-335 / MC58).